Here is a 255-residue protein sequence, read N- to C-terminus: Ornithine decarboxylase antizyme (255 aa).

It belongs to the ODC antizyme family. In terms of assembly, interacts with ODC and thereby sterically blocks ODC homodimerization.

Its function is as follows. Ornithine decarboxylase (ODC) antizyme protein that negatively regulates ODC activity and intracellular polyamine biosynthesis in response to increased intracellular polyamine levels. Binds to ODC monomers, inhibiting the assembly of the functional ODC homodimer, and targets the monomers for ubiquitin-independent proteolytic destruction by the 26S proteasome. The protein is Ornithine decarboxylase antizyme (OAZ1) of Eremothecium gossypii (strain ATCC 10895 / CBS 109.51 / FGSC 9923 / NRRL Y-1056) (Yeast).